The primary structure comprises 432 residues: Amino-acid acetyltransferase (432 aa).

Residues 286 to 425 (EVVREASIED…ASLYNYQRNS (140 aa)) enclose the N-acetyltransferase domain.

It belongs to the acetyltransferase family. ArgA subfamily.

It is found in the cytoplasm. It carries out the reaction L-glutamate + acetyl-CoA = N-acetyl-L-glutamate + CoA + H(+). It participates in amino-acid biosynthesis; L-arginine biosynthesis; N(2)-acetyl-L-ornithine from L-glutamate: step 1/4. The polypeptide is Amino-acid acetyltransferase (Pseudomonas putida (strain GB-1)).